Consider the following 404-residue polypeptide: Probable glucan endo-1,6-beta-glucosidase B (404 aa).

A signal peptide spans 1-20 (MTTYQTLFLIPLAISTLVTA). 2 N-linked (GlcNAc...) asparagine glycosylation sites follow: N33 and N130. E222 acts as the Proton donor in catalysis. N253 and N299 each carry an N-linked (GlcNAc...) asparagine glycan. The active-site Nucleophile is E324.

It belongs to the glycosyl hydrolase 5 (cellulase A) family.

The protein localises to the secreted. It carries out the reaction Random hydrolysis of (1-&gt;6)-linkages in (1-&gt;6)-beta-D-glucans.. In terms of biological role, beta-glucanases participate in the metabolism of beta-glucan, the main structural component of the cell wall. Acts on lutean, pustulan and 1,6-oligo-beta-D-glucosides. The chain is Probable glucan endo-1,6-beta-glucosidase B (exgB) from Aspergillus terreus (strain NIH 2624 / FGSC A1156).